Here is a 199-residue protein sequence, read N- to C-terminus: MSLTPVTLASQSSARQMILKNAGVAFEAVSPGVDEDAAKAGLLAEDVTPRDIADALAEMKAVKVSTKRPGLVIGADQTLDLKGRLIDKAGSLDEARARLLELRGTTHKLHSAVVVARDGRPIWRIVESAKLSVRPFSDAWLDRYIERRGEALLWSVGCYELESEGVQLFDKIEGDYFTILGLPLVGLLDFLRLHGALTV.

The active-site Proton acceptor is D76.

Belongs to the Maf family. A divalent metal cation is required as a cofactor.

The protein resides in the cytoplasm. The enzyme catalyses a ribonucleoside 5'-triphosphate + H2O = a ribonucleoside 5'-phosphate + diphosphate + H(+). It catalyses the reaction a 2'-deoxyribonucleoside 5'-triphosphate + H2O = a 2'-deoxyribonucleoside 5'-phosphate + diphosphate + H(+). Its function is as follows. Nucleoside triphosphate pyrophosphatase. May have a dual role in cell division arrest and in preventing the incorporation of modified nucleotides into cellular nucleic acids. The protein is Nucleoside triphosphate pyrophosphatase of Caulobacter vibrioides (strain ATCC 19089 / CIP 103742 / CB 15) (Caulobacter crescentus).